Consider the following 256-residue polypeptide: MAAAVGRLLRASVARHVSAIPWGISATAALRPAACGRTSLTNLLCSGSSQAKLFSTSSSCHAPAVTQHAPYFKGTAVVNGEFKDLSLDDFKGKYLVLFFYPLDFTFVCPTEIVAFSDKANEFHDVNCEVVAVSVDSHFSHLAWINTPRKNGGLGHMNIALLSDLTKQISRDYGVLLEGSGLALRGLFIIDPNGVIKHLSVNDLPVGRSVEETLRLVKAFQYVETHGEVCPANWTPDSPTIKPSPAASKEYFQKVNQ.

The N-terminal 61 residues, 1 to 61 (MAAAVGRLLR…KLFSTSSSCH (61 aa)), are a transit peptide targeting the mitochondrion. A Thioredoxin domain is found at 63 to 221 (PAVTQHAPYF…TLRLVKAFQY (159 aa)). N6-succinyllysine is present on lysine 83. The residue at position 91 (lysine 91) is an N6-acetyllysine; alternate. Lysine 91 carries the post-translational modification N6-succinyllysine; alternate. Cysteine 108 functions as the Cysteine sulfenic acid (-SOH) intermediate in the catalytic mechanism. Threonine 146 is modified (phosphothreonine).

The protein belongs to the peroxiredoxin family. AhpC/Prx1 subfamily. As to quaternary structure, homodimer; disulfide-linked, upon oxidation. 6 homodimers assemble to form a ring-like dodecamer. Interacts with NEK6. Interacts with LRRK2. Interacts with MAP3K13. Interacts with RPS6KC1 (via PX domain). In terms of processing, phosphorylated by LRRK2; phosphorylation reduces perodixase activity. Post-translationally, the enzyme can be inactivated by further oxidation of the cysteine sulfenic acid (C(P)-SOH) to sulphinic acid (C(P)-SO2H) and sulphonic acid (C(P)-SO3H) instead of its condensation to a disulfide bond. S-palmitoylated.

It is found in the mitochondrion. It localises to the cytoplasm. Its subcellular location is the early endosome. It catalyses the reaction a hydroperoxide + [thioredoxin]-dithiol = an alcohol + [thioredoxin]-disulfide + H2O. Functionally, thiol-specific peroxidase that catalyzes the reduction of hydrogen peroxide and organic hydroperoxides to water and alcohols, respectively. Plays a role in cell protection against oxidative stress by detoxifying peroxides. Acts synergistically with MAP3K13 to regulate the activation of NF-kappa-B in the cytosol. Required for the maintenance of physical strength. This Homo sapiens (Human) protein is Thioredoxin-dependent peroxide reductase, mitochondrial (PRDX3).